The primary structure comprises 379 residues: Lipid-A-disaccharide synthase (379 aa).

It belongs to the LpxB family.

The enzyme catalyses a lipid X + a UDP-2-N,3-O-bis[(3R)-3-hydroxyacyl]-alpha-D-glucosamine = a lipid A disaccharide + UDP + H(+). It functions in the pathway bacterial outer membrane biogenesis; LPS lipid A biosynthesis. In terms of biological role, condensation of UDP-2,3-diacylglucosamine and 2,3-diacylglucosamine-1-phosphate to form lipid A disaccharide, a precursor of lipid A, a phosphorylated glycolipid that anchors the lipopolysaccharide to the outer membrane of the cell. The sequence is that of Lipid-A-disaccharide synthase from Vibrio cholerae serotype O1 (strain ATCC 39541 / Classical Ogawa 395 / O395).